The sequence spans 37 residues: Large ribosomal subunit protein bL36 (37 aa).

The protein belongs to the bacterial ribosomal protein bL36 family.

The chain is Large ribosomal subunit protein bL36 (rpmJ) from Mycoplasma sp.